A 3165-amino-acid chain; its full sequence is Protein eyes shut homolog (3165 aa).

Residues 1–21 (MTDKSIVILSLMVFHSSFING) form the signal peptide. N-linked (GlcNAc...) asparagine glycosylation occurs at Asn166. 3 EGF-like domains span residues 170–212 (KQQF…KYCQ), 213–254 (ELDA…KNCS), and 256–292 (IIGQ…PFCE). Disulfide bonds link Cys174/Cys189, Cys183/Cys200, Cys202/Cys211, Cys217/Cys228, Cys222/Cys242, Cys244/Cys253, Cys260/Cys270, Cys265/Cys280, and Cys282/Cys291. N-linked (GlcNAc...) asparagine glycans are attached at residues Asn269 and Asn272. Residues Asn311 and Asn343 are each glycosylated (N-linked (GlcNAc...) asparagine). 2 EGF-like domains span residues 332-368 (DVSE…LLCK) and 370-406 (IQTS…KNCE). Intrachain disulfides connect Cys341-Cys356, Cys358-Cys367, Cys374-Cys385, and Cys396-Cys405. N-linked (GlcNAc...) asparagine glycosylation is found at Asn506 and Asn566. EGF-like domains are found at residues 567–602 (TTDD…RLCV) and 643–679 (DTED…TQCE). 46 cysteine pairs are disulfide-bonded: Cys575/Cys590, Cys592/Cys601, Cys669/Cys678, Cys685/Cys696, Cys690/Cys705, Cys707/Cys719, Cys737/Cys748, Cys742/Cys757, Cys759/Cys768, Cys775/Cys786, Cys780/Cys795, Cys797/Cys806, Cys813/Cys824, Cys818/Cys835, Cys837/Cys846, Cys853/Cys866, Cys860/Cys876, Cys878/Cys887, Cys894/Cys905, Cys899/Cys914, Cys916/Cys925, Cys932/Cys943, Cys937/Cys952, Cys954/Cys963, Cys970/Cys981, Cys975/Cys990, Cys992/Cys1001, Cys1008/Cys1019, Cys1013/Cys1028, Cys1030/Cys1039, Cys1046/Cys1056, Cys1051/Cys1065, Cys1067/Cys1076, Cys1083/Cys1094, Cys1088/Cys1103, Cys1105/Cys1114, Cys1121/Cys1137, Cys1131/Cys1147, Cys1149/Cys1158, Cys1165/Cys1176, Cys1170/Cys1185, Cys1187/Cys1196, Cys2037/Cys2063, Cys2103/Cys2114, Cys2108/Cys2128, and Cys2130/Cys2139. The EGF-like 8; calcium-binding domain occupies 681–720 (DIDECASHPCKNGATCIDQPGNYFCQCVPPFKVVDGFSCL). The EGF-like 9; calcium-binding domain maps to 733-769 (DIDDCILNACEHNSTCKDLHLSYQCVCLSDWEGNFCE). Residues 771 to 807 (ESNECKMNPCKNNSTCTDLYKSYRCECTSGWTGQNCS) form the EGF-like 10; calcium-binding domain. 3 consecutive EGF-like domains span residues 809 to 847 (EINE…QFCH), 849 to 888 (RYNL…KNCE), and 890 to 926 (DVKD…SLCE). One can recognise an EGF-like 14; calcium-binding domain in the interval 928 to 964 (EINECSSEPCKNNGTCVDLTNRFFCNCEPEYHGPFCE). The EGF-like 15 domain occupies 966-1002 (DVNKCKISPCLDEENCVYRTDGYNCLCAPGYTGINCE). Positions 1004–1040 (NLDECLSEPCLHDGVCIDGINHYTCDCKSGFFGTHCE) constitute an EGF-like 16; calcium-binding domain. 3 consecutive EGF-like domains span residues 1042–1077 (NAND…TQCK), 1079–1115 (KIND…AYCE), and 1117–1159 (SIDN…QFCE). In terms of domain architecture, EGF-like 20; calcium-binding spans 1161–1197 (NINECSSSPCLHGADCEDHINGYVCKCQPGWSGHHCE). Residues 1883-2063 (FSCVRYYGDS…AVKNYHINNC (181 aa)) form the Laminin G-like 1 domain. One can recognise an EGF-like 21 domain in the interval 2099-2140 (APSVCQQDVCHNGGTCHAIFLSSGIVSFQCDCPLHFTGRFCE). The Laminin G-like 2 domain maps to 2145–2339 (LFFPSFNGNS…NIENCHVPWC (195 aa)). N-linked (GlcNAc...) asparagine glycosylation is present at Asn2170. EGF-like domains lie at 2335–2368 (HVPW…YSGK) and 2371–2408 (QFAS…PLCT). Intrachain disulfides connect Cys2339–Cys2350, Cys2344–Cys2359, Cys2375–Cys2386, Cys2380–Cys2396, Cys2398–Cys2407, Cys2576–Cys2609, Cys2614–Cys2625, Cys2619–Cys2634, Cys2636–Cys2645, Cys2652–Cys2668, Cys2662–Cys2677, Cys2679–Cys2688, Cys2868–Cys2895, Cys2900–Cys2911, Cys2905–Cys2920, Cys2922–Cys2931, Cys2937–Cys2948, Cys2942–Cys2958, and Cys2960–Cys2969. The 191-residue stretch at 2419–2609 (SGTDAFGYTS…PNAGRSVGQC (191 aa)) folds into the Laminin G-like 3 domain. 2 consecutive EGF-like domains span residues 2610 to 2646 (HASP…SFCT) and 2648 to 2689 (TVST…IYCE). Residues 2717 to 2895 (DPSFRSNELS…AKGGSNVGDC (179 aa)) enclose the Laminin G-like 4 domain. 2 consecutive EGF-like domains span residues 2896-2932 (DGTA…NTCN) and 2933-2970 (QSVS…RYCE). Residues 2975 to 3165 (FSTAKFMGNS…YDGDEQNEVT (191 aa)) form the Laminin G-like 5 domain.

This sequence belongs to the EYS family. In terms of tissue distribution, expressed in retina (at protein level). Isoform 1: Detected in retina. Isoform 2: Detected in retina. Isoform 3: Strongly expressed in retina and testis. Isoform 4: Strongly expressed in testis, and weakly expressed in retina.

Its subcellular location is the cell projection. It is found in the cilium. It localises to the photoreceptor outer segment. The protein localises to the cytoplasm. The protein resides in the cytoskeleton. Its subcellular location is the cilium axoneme. It is found in the microtubule organizing center. It localises to the centrosome. The protein localises to the secreted. The protein resides in the extracellular space. Its subcellular location is the extracellular matrix. It is found in the interphotoreceptor matrix. Required to maintain the integrity of photoreceptor cells. Specifically required for normal morphology of the photoreceptor ciliary pocket, and might thus facilitate protein trafficking between the photoreceptor inner and outer segments via the transition zone. This chain is Protein eyes shut homolog (EYS), found in Homo sapiens (Human).